A 76-amino-acid polypeptide reads, in one-letter code: MAKIVRIKGEIVGKDEPMVFTKEYNVLKENDALETMYSEIGSKHAVKRANIKVVEISEISVEEIQSPILKKTLEMN.

The protein belongs to the eukaryotic ribosomal protein eL20 family. As to quaternary structure, part of the 50S ribosomal subunit. Binds 23S rRNA.

This chain is Large ribosomal subunit protein eL20, found in Methanococcus maripaludis (strain DSM 14266 / JCM 13030 / NBRC 101832 / S2 / LL).